The sequence spans 313 residues: Calcium homeostasis modulator protein 6 (313 aa).

The Cytoplasmic portion of the chain corresponds to 1 to 21 (MEKFKAVLDLQRKHRNALGYS). Residues 22 to 37 (LVTLLTAGGEKIFSSV) traverse the membrane as a helical segment. The Extracellular segment spans residues 38 to 46 (VFQCPCTAT). 3 disulfide bridges follow: Cys41–Cys125, Cys43–Cys154, and Cys138–Cys145. A helical transmembrane segment spans residues 47 to 68 (WNLPYGLVFLLVPALALFLLGY). The Cytoplasmic segment spans residues 69–101 (ALSARTWRLLTGCCSRSARFSSGLRSAFVCAQL). Residues 102 to 126 (SMTAAFAPLTWVAVALLEGSFYQCA) traverse the membrane as a helical segment. Residues 127-167 (VSGSARLAPYLCKGRDPNCNATLPQAPCNKQKVEMQEILSQ) lie on the Extracellular side of the membrane. The helical transmembrane segment at 168-190 (LKAQSQVFGWILIAAVIILLLLV) threads the bilayer. At 191–313 (KSVTRCFSPV…DMSMTNTHEL (123 aa)) the chain is on the cytoplasmic side.

The protein belongs to the CALHM family. In terms of assembly, oligomerizes to form decameric and undecameric channels. N-glycosylated. In terms of tissue distribution, immune cells in primary and secondary lymphoid organs.

It localises to the cell membrane. The enzyme catalyses ATP(in) = ATP(out). Inhibited by Gd(3+). Partially inhibited by divalent ions Ca(2+) and Ba(2+). Pore-forming subunit of an ATP-permeable channel. In response to pathogen-derived and proinflammatory stimuli, relocates from intracellular compartments to NK-dendritic cell and NK-macrophage immune synapses where it mediates ATP efflux and NK cell activation involved in antimicrobial and antitumor responses. May assemble to form gap junction channel-like structures with gating and ion conductance likely regulated by membrane lipids and voltage rather than by extracellular calcium levels. The chain is Calcium homeostasis modulator protein 6 from Mus musculus (Mouse).